The chain runs to 123 residues: Large ribosomal subunit protein bL12 (123 aa).

The protein belongs to the bacterial ribosomal protein bL12 family. In terms of assembly, homodimer. Part of the ribosomal stalk of the 50S ribosomal subunit. Forms a multimeric L10(L12)X complex, where L10 forms an elongated spine to which 2 to 4 L12 dimers bind in a sequential fashion. Binds GTP-bound translation factors.

In terms of biological role, forms part of the ribosomal stalk which helps the ribosome interact with GTP-bound translation factors. Is thus essential for accurate translation. The protein is Large ribosomal subunit protein bL12 of Bacillus licheniformis (strain ATCC 14580 / DSM 13 / JCM 2505 / CCUG 7422 / NBRC 12200 / NCIMB 9375 / NCTC 10341 / NRRL NRS-1264 / Gibson 46).